The primary structure comprises 407 residues: Bifunctional enzyme IspD/IspF (407 aa).

Residues 1–246 (MQPLAEATTI…RQDHVSFPDI (246 aa)) are 2-C-methyl-D-erythritol 4-phosphate cytidylyltransferase. The segment at 247–407 (RTGNGYDVHS…TVIYPGEVPE (161 aa)) is 2-C-methyl-D-erythritol 2,4-cyclodiphosphate synthase. A divalent metal cation contacts are provided by Asp253 and His255. Residues 253-255 (DVH) and 279-280 (HS) contribute to the 4-CDP-2-C-methyl-D-erythritol 2-phosphate site. His287 contributes to the a divalent metal cation binding site. Residues 301–303 (DIG), 377–380 (TTNE), Phe384, and Arg387 each bind 4-CDP-2-C-methyl-D-erythritol 2-phosphate.

It in the N-terminal section; belongs to the IspD/TarI cytidylyltransferase family. IspD subfamily. This sequence in the C-terminal section; belongs to the IspF family. It depends on a divalent metal cation as a cofactor.

The catalysed reaction is 2-C-methyl-D-erythritol 4-phosphate + CTP + H(+) = 4-CDP-2-C-methyl-D-erythritol + diphosphate. It catalyses the reaction 4-CDP-2-C-methyl-D-erythritol 2-phosphate = 2-C-methyl-D-erythritol 2,4-cyclic diphosphate + CMP. It participates in isoprenoid biosynthesis; isopentenyl diphosphate biosynthesis via DXP pathway; isopentenyl diphosphate from 1-deoxy-D-xylulose 5-phosphate: step 2/6. The protein operates within isoprenoid biosynthesis; isopentenyl diphosphate biosynthesis via DXP pathway; isopentenyl diphosphate from 1-deoxy-D-xylulose 5-phosphate: step 4/6. Bifunctional enzyme that catalyzes the formation of 4-diphosphocytidyl-2-C-methyl-D-erythritol from CTP and 2-C-methyl-D-erythritol 4-phosphate (MEP) (IspD), and catalyzes the conversion of 4-diphosphocytidyl-2-C-methyl-D-erythritol 2-phosphate (CDP-ME2P) to 2-C-methyl-D-erythritol 2,4-cyclodiphosphate (ME-CPP) with a corresponding release of cytidine 5-monophosphate (CMP) (IspF). The protein is Bifunctional enzyme IspD/IspF of Brucella anthropi (strain ATCC 49188 / DSM 6882 / CCUG 24695 / JCM 21032 / LMG 3331 / NBRC 15819 / NCTC 12168 / Alc 37) (Ochrobactrum anthropi).